We begin with the raw amino-acid sequence, 170 residues long: Ribosome maturation factor RimM (170 aa).

A PRC barrel domain is found at 97-170 (NADEYYWVDL…LVVVDWDPEF (74 aa)).

The protein belongs to the RimM family. In terms of assembly, binds ribosomal protein uS19.

It localises to the cytoplasm. An accessory protein needed during the final step in the assembly of 30S ribosomal subunit, possibly for assembly of the head region. Essential for efficient processing of 16S rRNA. May be needed both before and after RbfA during the maturation of 16S rRNA. It has affinity for free ribosomal 30S subunits but not for 70S ribosomes. The protein is Ribosome maturation factor RimM of Stenotrophomonas maltophilia (strain R551-3).